The sequence spans 326 residues: Ketol-acid reductoisomerase (NADP(+)) (326 aa).

Residues 2–182 (AKIYGDEDAS…GFTRAGVIKT (181 aa)) form the KARI N-terminal Rossmann domain. NADP(+)-binding positions include 25–28 (YGSQ), Arg48, Ser53, and 83–86 (DEVQ). His108 is an active-site residue. Gly134 serves as a coordination point for NADP(+). One can recognise a KARI C-terminal knotted domain in the interval 183-325 (TFREEVETDL…ERLRKMMGFE (143 aa)). Residues Asp191, Glu195, Glu227, and Glu231 each contribute to the Mg(2+) site. Position 252 (Ser252) interacts with substrate.

This sequence belongs to the ketol-acid reductoisomerase family. Requires Mg(2+) as cofactor.

The catalysed reaction is (2R)-2,3-dihydroxy-3-methylbutanoate + NADP(+) = (2S)-2-acetolactate + NADPH + H(+). It catalyses the reaction (2R,3R)-2,3-dihydroxy-3-methylpentanoate + NADP(+) = (S)-2-ethyl-2-hydroxy-3-oxobutanoate + NADPH + H(+). The protein operates within amino-acid biosynthesis; L-isoleucine biosynthesis; L-isoleucine from 2-oxobutanoate: step 2/4. It participates in amino-acid biosynthesis; L-valine biosynthesis; L-valine from pyruvate: step 2/4. Involved in the biosynthesis of branched-chain amino acids (BCAA). Catalyzes an alkyl-migration followed by a ketol-acid reduction of (S)-2-acetolactate (S2AL) to yield (R)-2,3-dihydroxy-isovalerate. In the isomerase reaction, S2AL is rearranged via a Mg-dependent methyl migration to produce 3-hydroxy-3-methyl-2-ketobutyrate (HMKB). In the reductase reaction, this 2-ketoacid undergoes a metal-dependent reduction by NADPH to yield (R)-2,3-dihydroxy-isovalerate. In Methanopyrus kandleri (strain AV19 / DSM 6324 / JCM 9639 / NBRC 100938), this protein is Ketol-acid reductoisomerase (NADP(+)).